We begin with the raw amino-acid sequence, 215 residues long: MRGLRWRYTRLPSQVEDTLSGEEGNEEEEEEEAAPDPAAAPEDPTVPQLTEASQVLSASEIRQLSFHFPPRVTGHPWSLVFCTSRDGFSLQSLYRRMEGCSGPVLLVLRDQDGQIFGAFSSSAIRLSKGFYGTGETFLFSFSPQLKVFKWTGSNSFFVKGDLDSLMMGSGSGRFGLWLDGDLFRGGSSPCPTFNNEVLARQEQFCIQELEAWLLS.

Residues methionine 1 to valine 46 are disordered. Acidic residues predominate over residues leucine 19–alanine 34. The TLDc domain occupies glutamine 54 to serine 215.

This sequence belongs to the OXR1 family.

The polypeptide is TLD domain-containing protein 2 (TLDC2) (Homo sapiens (Human)).